The primary structure comprises 138 residues: Succinate dehydrogenase assembly factor 4, mitochondrial (138 aa).

Residues 1-32 (MLCAIKSTGYRYPRTGALNLLRGRPFNMATRK) constitute a mitochondrion transit peptide. Positions 71–98 (QATGDRTKESLNSPLLTKNDIGSFSPEF) are enriched in polar residues. Positions 71–138 (QATGDRTKES…YSFNGRVTDF (68 aa)) are disordered.

This sequence belongs to the SDHAF4 family. As to quaternary structure, interacts with SDH1 in its FAD-bound form.

It localises to the mitochondrion matrix. Its function is as follows. Plays an essential role in the assembly of succinate dehydrogenase (SDH), an enzyme complex (also referred to as respiratory complex II) that is a component of both the tricarboxylic acid (TCA) cycle and the mitochondrial electron transport chain, and which couples the oxidation of succinate to fumarate with the reduction of ubiquinone (coenzyme Q) to ubiquinol. Binds to the flavoprotein subunit SDH1 in its FAD-bound form, blocking the generation of excess reactive oxygen species (ROS) and facilitating its assembly with the iron-sulfur protein subunit SDH2 into the SDH catalytic dimer. In Saccharomyces cerevisiae (strain ATCC 204508 / S288c) (Baker's yeast), this protein is Succinate dehydrogenase assembly factor 4, mitochondrial.